The primary structure comprises 115 residues: T cell receptor beta variable 7-2 (115 aa).

Residues 1 to 21 (MGTRLLFWVAFCLLGADHTGA) form the signal peptide. The Ig-like domain occupies 22–115 (GVSQSPSNKV…SAVYLCASSL (94 aa)). The cysteines at positions 42 and 111 are disulfide-linked.

In terms of assembly, alpha-beta TR is a heterodimer composed of an alpha and beta chain; disulfide-linked. The alpha-beta TR is associated with the transmembrane signaling CD3 coreceptor proteins to form the TR-CD3 (TcR or TCR). The assembly of alpha-beta TR heterodimers with CD3 occurs in the endoplasmic reticulum where a single alpha-beta TR heterodimer associates with one CD3D-CD3E heterodimer, one CD3G-CD3E heterodimer and one CD247 homodimer forming a stable octameric structure. CD3D-CD3E and CD3G-CD3E heterodimers preferentially associate with TR alpha and TR beta chains, respectively. The association of the CD247 homodimer is the last step of TcR assembly in the endoplasmic reticulum and is required for transport to the cell surface.

It localises to the cell membrane. Its function is as follows. V region of the variable domain of T cell receptor (TR) beta chain that participates in the antigen recognition. Alpha-beta T cell receptors are antigen specific receptors which are essential to the immune response and are present on the cell surface of T lymphocytes. Recognize peptide-major histocompatibility (MH) (pMH) complexes that are displayed by antigen presenting cells (APC), a prerequisite for efficient T cell adaptive immunity against pathogens. Binding of alpha-beta TR to pMH complex initiates TR-CD3 clustering on the cell surface and intracellular activation of LCK that phosphorylates the ITAM motifs of CD3G, CD3D, CD3E and CD247 enabling the recruitment of ZAP70. In turn ZAP70 phosphorylates LAT, which recruits numerous signaling molecules to form the LAT signalosome. The LAT signalosome propagates signal branching to three major signaling pathways, the calcium, the mitogen-activated protein kinase (MAPK) kinase and the nuclear factor NF-kappa-B (NF-kB) pathways, leading to the mobilization of transcription factors that are critical for gene expression and essential for T cell growth and differentiation. The T cell repertoire is generated in the thymus, by V-(D)-J rearrangement. This repertoire is then shaped by intrathymic selection events to generate a peripheral T cell pool of self-MH restricted, non-autoaggressive T cells. Post-thymic interaction of alpha-beta TR with the pMH complexes shapes TR structural and functional avidity. In Homo sapiens (Human), this protein is T cell receptor beta variable 7-2.